Reading from the N-terminus, the 238-residue chain is Protein CPn_0658/CP_0089/CPj0658/CpB0684 (238 aa).

This sequence belongs to the chlamydial CPn_0658/CT_538/TC_0825 family.

This is Protein CPn_0658/CP_0089/CPj0658/CpB0684 from Chlamydia pneumoniae (Chlamydophila pneumoniae).